The chain runs to 419 residues: Putative zinc metalloprotease SPy_1963/M5005_Spy1674 (419 aa).

His18 serves as a coordination point for Zn(2+). Residue Glu19 is part of the active site. His22 serves as a coordination point for Zn(2+). A run of 4 helical transmembrane segments spans residues 169–191 (LITN…ILLV), 301–323 (LAWS…FSLN), 343–365 (LESV…LIPI), and 392–411 (AYIT…AVTW). Residues 175–274 (GPMNNFILGI…LKTVAVKPQK (100 aa)) form the PDZ domain.

This sequence belongs to the peptidase M50B family. Zn(2+) is required as a cofactor.

The protein resides in the cell membrane. This Streptococcus pyogenes serotype M1 protein is Putative zinc metalloprotease SPy_1963/M5005_Spy1674.